The following is a 356-amino-acid chain: Tyrosine recombinase XerS (356 aa).

The region spanning 16-121 (LMPWFVLEYY…ALSCLYKYLT (106 aa)) is the Core-binding (CB) domain. Positions 169–354 (KFLDYVENEY…VNDEQKNALD (186 aa)) constitute a Tyr recombinase domain. Residues R210, K234, H306, R309, and H332 contribute to the active site. Y341 serves as the catalytic O-(3'-phospho-DNA)-tyrosine intermediate.

Belongs to the 'phage' integrase family. XerS subfamily.

The protein resides in the cytoplasm. Its activity is regulated as follows. FtsK is required for recombination. Site-specific tyrosine recombinase, which acts by catalyzing the cutting and rejoining of the recombining DNA molecules. Essential to convert dimers of the bacterial chromosome into monomers to permit their segregation at cell division. This is Tyrosine recombinase XerS from Streptococcus thermophilus (strain ATCC BAA-250 / LMG 18311).